Reading from the N-terminus, the 475-residue chain is Ribulose bisphosphate carboxylase large chain (475 aa).

N6,N6,N6-trimethyllysine is present on Lys-14. Positions 123 and 173 each coordinate substrate. Catalysis depends on Lys-175, which acts as the Proton acceptor. Lys-177 contacts substrate. Positions 201, 203, and 204 each coordinate Mg(2+). Residue Lys-201 is modified to N6-carboxylysine. Catalysis depends on His-294, which acts as the Proton acceptor. The substrate site is built by Arg-295, His-327, and Ser-379.

This sequence belongs to the RuBisCO large chain family. Type I subfamily. In terms of assembly, heterohexadecamer of 8 large chains and 8 small chains; disulfide-linked. The disulfide link is formed within the large subunit homodimers. It depends on Mg(2+) as a cofactor. In terms of processing, the disulfide bond which can form in the large chain dimeric partners within the hexadecamer appears to be associated with oxidative stress and protein turnover.

It localises to the plastid. It is found in the chloroplast. The catalysed reaction is 2 (2R)-3-phosphoglycerate + 2 H(+) = D-ribulose 1,5-bisphosphate + CO2 + H2O. The enzyme catalyses D-ribulose 1,5-bisphosphate + O2 = 2-phosphoglycolate + (2R)-3-phosphoglycerate + 2 H(+). Its function is as follows. RuBisCO catalyzes two reactions: the carboxylation of D-ribulose 1,5-bisphosphate, the primary event in carbon dioxide fixation, as well as the oxidative fragmentation of the pentose substrate in the photorespiration process. Both reactions occur simultaneously and in competition at the same active site. This Actinidia chinensis (Kiwi) protein is Ribulose bisphosphate carboxylase large chain.